A 157-amino-acid chain; its full sequence is 2-amino-4-hydroxy-6-hydroxymethyldihydropteridine pyrophosphokinase (157 aa).

This sequence belongs to the HPPK family.

It catalyses the reaction 6-hydroxymethyl-7,8-dihydropterin + ATP = (7,8-dihydropterin-6-yl)methyl diphosphate + AMP + H(+). It functions in the pathway cofactor biosynthesis; tetrahydrofolate biosynthesis; 2-amino-4-hydroxy-6-hydroxymethyl-7,8-dihydropteridine diphosphate from 7,8-dihydroneopterin triphosphate: step 4/4. Its function is as follows. Catalyzes the transfer of pyrophosphate from adenosine triphosphate (ATP) to 6-hydroxymethyl-7,8-dihydropterin, an enzymatic step in folate biosynthesis pathway. In Campylobacter jejuni subsp. jejuni serotype O:2 (strain ATCC 700819 / NCTC 11168), this protein is 2-amino-4-hydroxy-6-hydroxymethyldihydropteridine pyrophosphokinase (folK).